Reading from the N-terminus, the 98-residue chain is NADH-ubiquinone oxidoreductase chain 4L (98 aa).

Transmembrane regions (helical) follow at residues 2–22 (TSAF…TFMF), 26–46 (LMST…MTST), and 59–79 (IPIT…ALLV).

Belongs to the complex I subunit 4L family. As to quaternary structure, core subunit of respiratory chain NADH dehydrogenase (Complex I) which is composed of 45 different subunits.

It is found in the mitochondrion inner membrane. The catalysed reaction is a ubiquinone + NADH + 5 H(+)(in) = a ubiquinol + NAD(+) + 4 H(+)(out). In terms of biological role, core subunit of the mitochondrial membrane respiratory chain NADH dehydrogenase (Complex I) which catalyzes electron transfer from NADH through the respiratory chain, using ubiquinone as an electron acceptor. Part of the enzyme membrane arm which is embedded in the lipid bilayer and involved in proton translocation. This is NADH-ubiquinone oxidoreductase chain 4L from Rattus norvegicus (Rat).